A 423-amino-acid chain; its full sequence is SH2 domain-containing protein 5 (423 aa).

The PID domain maps to 28–146 (AQYVGLLPCG…LLCRSFQLAY (119 aa)). One can recognise an SH2 domain in the interval 296-392 (WAFAGISRPC…LDMGRLNPTY (97 aa)). The segment at 394-423 (EQDCGPLGRPPRTLRPLSHAKSEAELQGLG) is disordered. Residues 398–410 (GPLGRPPRTLRPL) are compositionally biased toward low complexity.

In terms of assembly, interacts with BCR.

It is found in the postsynaptic density. In terms of biological role, may be involved in synaptic plasticity regulation through the control of Rac-GTP levels. This is SH2 domain-containing protein 5 from Pongo abelii (Sumatran orangutan).